The primary structure comprises 245 residues: Adenosylcobinamide-GDP ribazoletransferase (245 aa).

6 helical membrane passes run W35–L55, I108–H128, G137–V157, I176–M196, T197–R217, and I222–A242.

Belongs to the CobS family. Mg(2+) serves as cofactor.

It is found in the cell inner membrane. It carries out the reaction alpha-ribazole + adenosylcob(III)inamide-GDP = adenosylcob(III)alamin + GMP + H(+). The catalysed reaction is alpha-ribazole 5'-phosphate + adenosylcob(III)inamide-GDP = adenosylcob(III)alamin 5'-phosphate + GMP + H(+). It functions in the pathway cofactor biosynthesis; adenosylcobalamin biosynthesis; adenosylcobalamin from cob(II)yrinate a,c-diamide: step 7/7. Joins adenosylcobinamide-GDP and alpha-ribazole to generate adenosylcobalamin (Ado-cobalamin). Also synthesizes adenosylcobalamin 5'-phosphate from adenosylcobinamide-GDP and alpha-ribazole 5'-phosphate. The sequence is that of Adenosylcobinamide-GDP ribazoletransferase from Nitratidesulfovibrio vulgaris (strain DP4) (Desulfovibrio vulgaris).